The primary structure comprises 251 residues: Aliphatic sulfonates import ATP-binding protein SsuB (251 aa).

The region spanning 3 to 231 is the ABC transporter domain; that stretch reads VSIDGVSKYF…PRSKTSESFQ (229 aa). 39–46 provides a ligand contact to ATP; the sequence is GPSGCGKS.

The protein belongs to the ABC transporter superfamily. Aliphatic sulfonates importer (TC 3.A.1.17.2) family. In terms of assembly, the complex is composed of two ATP-binding proteins (SsuB), two transmembrane proteins (SsuC) and a solute-binding protein (SsuA).

It localises to the cell membrane. The enzyme catalyses ATP + H2O + aliphatic sulfonate-[sulfonate-binding protein]Side 1 = ADP + phosphate + aliphatic sulfonateSide 2 + [sulfonate-binding protein]Side 1.. In terms of biological role, part of the ABC transporter complex SsuABC involved in aliphatic sulfonates import. Responsible for energy coupling to the transport system. The chain is Aliphatic sulfonates import ATP-binding protein SsuB from Bacillus cereus (strain ATCC 10987 / NRS 248).